The following is a 212-amino-acid chain: MKKIPRIGVGGPVGSGKMAIIEAVVPILIKLGYRILVITNDIVTTEDAKHVQRTLKGVLIEDRIVGVETGGCPHTAVREDPSMNLAAVEEMEAKFPDTDLVLLESGGDNLTLTFSPALIDFFIYVIDVAAGDKIPCKNGPGISQSDILVINKTDLAPYVGASLQVMDDDSRMMRGKKPFVFTNCKTNEGIDDLVHLIRENVLFDTEVSKESA.

11–18 (GPVGSGKM) is a GTP binding site.

This sequence belongs to the SIMIBI class G3E GTPase family. UreG subfamily. Homodimer. UreD, UreF and UreG form a complex that acts as a GTP-hydrolysis-dependent molecular chaperone, activating the urease apoprotein by helping to assemble the nickel containing metallocenter of UreC. The UreE protein probably delivers the nickel.

The protein resides in the cytoplasm. Facilitates the functional incorporation of the urease nickel metallocenter. This process requires GTP hydrolysis, probably effectuated by UreG. In terms of biological role, disrupting the ure2 operon has no effect on urease activity, or pathogen survival in BALB/c mice when inoculated by gavage, but confers slightly enhanced resistance to low pH killing in vitro. This chain is Urease accessory protein UreG 2, found in Brucella suis biovar 1 (strain 1330).